The sequence spans 387 residues: MDMNSFSPMMPTSPLSMINQIKFEDEPDLKDLFITVDEPESHVTTIETFITYRIITKTSRGEFDSSEFEVRRRYQDFLWLKGKLEEAHPTLIIPPLPEKFIVKGMVERFNDDFIETRRKALHKFLNRIADHPTLTFNEDFKIFLTAQAWELSSHKKQGPGLLSRMGQTVRAVASSMRGVKNRPEEFMEMNNFIELFSQKINLIDKISQRIYKEEREYFDEMKEYGPIHILWSASEEDLVDTLKDVAGCIDRCCKATEKRMSGLSEALLPVVREYVLYSEMLMGVMKRRDQIQAELDSKVEALTYKKTDTDLLPEEIGKLEDKVECANNALKADWERWKQNMQNDIKLAFTDMAEENIHYYEQCLATWESFLTSQTNLHLEETSEDKP.

One can recognise a PX domain in the interval 30-151; it reads KDLFITVDEP…IFLTAQAWEL (122 aa). Residues R73, Q75, K103, and R117 each contribute to the a 1,2-diacyl-sn-glycero-3-phospho-(1D-myo-inositol-3-phosphate) site. A BAR domain is found at 178 to 387; the sequence is GVKNRPEEFM…HLEETSEDKP (210 aa).

It belongs to the sorting nexin family. In terms of assembly, heterodimer; heterodimerizes with SNX4.

The protein localises to the early endosome membrane. Its function is as follows. Involved in the regulation of endocytosis and in several stages of intracellular trafficking. Together with SNX4, involved in autophagosome assembly by regulating trafficking and recycling of phospholipid scramblase ATG9A. The polypeptide is Sorting nexin-7 (SNX7) (Macaca fascicularis (Crab-eating macaque)).